The following is a 332-amino-acid chain: uncharacterized protein (332 aa).

The interval 159–256 (PLEISGRGGN…PRPHPWGPGP (98 aa)) is disordered. Positions 201-231 (RPPSPRPPSPRPPHPRPPSPRPPHPRPPSPR) are enriched in pro residues.

It is found in the virion. This is an uncharacterized protein from Acanthamoeba polyphaga (Amoeba).